The primary structure comprises 193 residues: Large ribosomal subunit protein uL18 (193 aa).

It belongs to the universal ribosomal protein uL18 family. As to quaternary structure, part of the 50S ribosomal subunit. Contacts the 5S and 23S rRNAs.

In terms of biological role, this is one of the proteins that bind and probably mediate the attachment of the 5S RNA into the large ribosomal subunit, where it forms part of the central protuberance. The protein is Large ribosomal subunit protein uL18 of Methanococcus maripaludis (strain C6 / ATCC BAA-1332).